We begin with the raw amino-acid sequence, 214 residues long: Phosphatidylserine decarboxylase proenzyme (214 aa).

Catalysis depends on serine 182, which acts as the Schiff-base intermediate with substrate; via pyruvic acid. Serine 182 bears the Pyruvic acid (Ser); by autocatalysis mark.

The protein belongs to the phosphatidylserine decarboxylase family. PSD-A subfamily. As to quaternary structure, heterodimer of a large membrane-associated beta subunit and a small pyruvoyl-containing alpha subunit. Pyruvate serves as cofactor. In terms of processing, is synthesized initially as an inactive proenzyme. Formation of the active enzyme involves a self-maturation process in which the active site pyruvoyl group is generated from an internal serine residue via an autocatalytic post-translational modification. Two non-identical subunits are generated from the proenzyme in this reaction, and the pyruvate is formed at the N-terminus of the alpha chain, which is derived from the carboxyl end of the proenzyme. The post-translation cleavage follows an unusual pathway, termed non-hydrolytic serinolysis, in which the side chain hydroxyl group of the serine supplies its oxygen atom to form the C-terminus of the beta chain, while the remainder of the serine residue undergoes an oxidative deamination to produce ammonia and the pyruvoyl prosthetic group on the alpha chain.

It localises to the cell membrane. It catalyses the reaction a 1,2-diacyl-sn-glycero-3-phospho-L-serine + H(+) = a 1,2-diacyl-sn-glycero-3-phosphoethanolamine + CO2. It participates in phospholipid metabolism; phosphatidylethanolamine biosynthesis; phosphatidylethanolamine from CDP-diacylglycerol: step 2/2. In terms of biological role, catalyzes the formation of phosphatidylethanolamine (PtdEtn) from phosphatidylserine (PtdSer). This Burkholderia ambifaria (strain MC40-6) protein is Phosphatidylserine decarboxylase proenzyme.